The chain runs to 572 residues: Linalool synthase TPS2, chloroplastic (572 aa).

The transit peptide at 1-27 directs the protein to the chloroplast; sequence EVEEPKTKISASTAEASSSRISSAKMT. Residues 1-45 form a disordered region; sequence EVEEPKTKISASTAEASSSRISSAKMTADGTIKLGDQSPLKQSEK. Positions 8 to 28 are enriched in low complexity; it reads KISASTAEASSSRISSAKMTA. The (2E)-geranyl diphosphate site is built by Arg-284, Asp-321, Asp-325, Arg-462, and Asn-465. Mg(2+)-binding residues include Asp-321 and Asp-325. A DDXXD motif motif is present at residues 321-325; it reads DDVYD. Residues Asn-465, Thr-469, and Ser-473 each coordinate Mg(2+).

It belongs to the terpene synthase family. Tpsb subfamily. As to quaternary structure, monomer. It depends on Mg(2+) as a cofactor. The cofactor is Mn(2+). As to expression, expressed in flowers and fruits.

The protein localises to the plastid. Its subcellular location is the chloroplast. It carries out the reaction (2E)-geranyl diphosphate = beta-myrcene + diphosphate. The enzyme catalyses (2E)-geranyl diphosphate + H2O = linalool + diphosphate. The catalysed reaction is (2E)-geranyl diphosphate = (Z)-beta-ocimene + diphosphate. It catalyses the reaction (2E)-geranyl diphosphate = (E)-beta-ocimene + diphosphate. It functions in the pathway secondary metabolite biosynthesis; terpenoid biosynthesis. Functionally, monoterpene synthase (mono-TPS) involved in the biosynthesis of monoterpenes natural products, constituent of coffee beverage aroma. Catalyzes the conversion of (2E)-geranyl diphosphate (GPP) into linalool and beta-myrcene, and, as minor products, cis-ocimene and trans-ocimene. Not able to use geranylgeranyl pyrophosphate (GGPP) and farnesyl pyrophosphate (FPP) as substrates. This is Linalool synthase TPS2, chloroplastic from Coffea arabica (Arabian coffee).